A 360-amino-acid polypeptide reads, in one-letter code: Protein Wnt-2 (360 aa).

The first 25 residues, 1 to 25, serve as a signal peptide directing secretion; that stretch reads MNAPLGGIWLWLPLLLTWLTPEVNS. Intrachain disulfides connect cysteine 76–cysteine 87, cysteine 127–cysteine 135, cysteine 137–cysteine 157, cysteine 206–cysteine 220, cysteine 208–cysteine 215, cysteine 278–cysteine 309, cysteine 294–cysteine 304, cysteine 308–cysteine 348, cysteine 324–cysteine 339, cysteine 326–cysteine 336, and cysteine 331–cysteine 332. Serine 212 carries the O-palmitoleoyl serine; by PORCN lipid modification. A glycan (N-linked (GlcNAc...) asparagine) is linked at asparagine 295.

Belongs to the Wnt family. Palmitoleoylation is required for efficient binding to frizzled receptors. Depalmitoleoylation leads to Wnt signaling pathway inhibition.

The protein resides in the secreted. It localises to the extracellular space. Its subcellular location is the extracellular matrix. In terms of biological role, ligand for members of the frizzled family of seven transmembrane receptors. Functions in the canonical Wnt signaling pathway that results in activation of transcription factors of the TCF/LEF family. Functions as a upstream regulator of FGF10 expression. Plays an important role in embryonic lung development. May contribute to embryonic brain development by regulating the proliferation of dopaminergic precursors and neurons. The protein is Protein Wnt-2 (WNT2) of Gorilla gorilla gorilla (Western lowland gorilla).